The sequence spans 245 residues: Derlin-1 (245 aa).

Residues 1–17 (MDAGVWYRSLPRFTRYW) lie on the Cytoplasmic side of the membrane. A helical membrane pass occupies residues 18–38 (LTATVVLSMLCRFDVIPLHWL). The Lumenal portion of the chain corresponds to 39–58 (HLDRSAVFSKLQLWRCMTSL). The chain crosses the membrane as a helical span at residues 59–79 (FVFPISSNTAFHFLINCFFIV). Topologically, residues 80–99 (QYSSKLEKDQYSRSPADYLY) are cytoplasmic. A helical membrane pass occupies residues 100 to 120 (LLIVSAVLANIGGMIFNVYFL). At 121–156 (MDTLVLAITYIWCQLNKDVTVSFWFGTRFKAMYLPW) the chain is on the lumenal side. Residues 157–177 (VLAAFEFIFHFSLASLVGIFV) form a helical membrane-spanning segment. Residues 178-245 (GHVYYFFKFQ…WGRGMTLGRN (68 aa)) are Cytoplasmic-facing. The segment at 218 to 245 (FGLPPESRAPPRQATESPWGRGMTLGRN) is disordered.

The protein belongs to the derlin family.

Its subcellular location is the endoplasmic reticulum membrane. Functionally, may be involved in the degradation process of specific misfolded endoplasmic reticulum (ER) luminal proteins. May also involved in endoplasmic reticulum stress-induced pre-emptive quality control, a mechanism that selectively attenuates the translocation of newly synthesized proteins into the endoplasmic reticulum and reroutes them to the cytosol for proteasomal degradation. The polypeptide is Derlin-1 (Drosophila melanogaster (Fruit fly)).